Reading from the N-terminus, the 315-residue chain is Methionyl-tRNA formyltransferase (315 aa).

The segment at Ser-2–Asp-189 is N-terminal domain. Ser-113–Pro-116 is a binding site for (6S)-5,6,7,8-tetrahydrofolate. The C-terminal domain stretch occupies residues Lys-210–Ala-315.

It belongs to the Fmt family.

It catalyses the reaction L-methionyl-tRNA(fMet) + (6R)-10-formyltetrahydrofolate = N-formyl-L-methionyl-tRNA(fMet) + (6S)-5,6,7,8-tetrahydrofolate + H(+). In terms of biological role, attaches a formyl group to the free amino group of methionyl-tRNA(fMet). The formyl group appears to play a dual role in the initiator identity of N-formylmethionyl-tRNA by promoting its recognition by IF2 and preventing the misappropriation of this tRNA by the elongation apparatus. The polypeptide is Methionyl-tRNA formyltransferase (Salmonella choleraesuis (strain SC-B67)).